Consider the following 99-residue polypeptide: DNA-directed RNA polymerase subunit omega (99 aa).

The tract at residues 55–99 (EAGTVISDPNPEEKRERLRIEREERKRQREQEQKELENRLRDEKN) is disordered. Positions 65 to 99 (PEEKRERLRIEREERKRQREQEQKELENRLRDEKN) are enriched in basic and acidic residues.

The protein belongs to the RNA polymerase subunit omega family. The RNAP catalytic core consists of 2 alpha, 1 beta, 1 beta' and 1 omega subunit. When a sigma factor is associated with the core the holoenzyme is formed, which can initiate transcription.

The enzyme catalyses RNA(n) + a ribonucleoside 5'-triphosphate = RNA(n+1) + diphosphate. Promotes RNA polymerase assembly. Latches the N- and C-terminal regions of the beta' subunit thereby facilitating its interaction with the beta and alpha subunits. The chain is DNA-directed RNA polymerase subunit omega from Enterococcus faecalis (strain ATCC 700802 / V583).